The following is a 103-amino-acid chain: Large ribosomal subunit protein uL23 (103 aa).

This sequence belongs to the universal ribosomal protein uL23 family. Part of the 50S ribosomal subunit. Contacts protein L29, and trigger factor when it is bound to the ribosome.

Its function is as follows. One of the early assembly proteins it binds 23S rRNA. One of the proteins that surrounds the polypeptide exit tunnel on the outside of the ribosome. Forms the main docking site for trigger factor binding to the ribosome. The protein is Large ribosomal subunit protein uL23 of Aquifex aeolicus (strain VF5).